A 422-amino-acid chain; its full sequence is Serine--tRNA ligase (422 aa).

L-serine is bound at residue Thr231 to Glu233. Residue Arg261–Glu263 coordinates ATP. Glu284 is an L-serine binding site. Position 348 to 351 (Glu348 to Ser351) interacts with ATP. L-serine is bound at residue Ser383.

Belongs to the class-II aminoacyl-tRNA synthetase family. Type-1 seryl-tRNA synthetase subfamily. As to quaternary structure, homodimer. The tRNA molecule binds across the dimer.

The protein localises to the cytoplasm. The catalysed reaction is tRNA(Ser) + L-serine + ATP = L-seryl-tRNA(Ser) + AMP + diphosphate + H(+). It carries out the reaction tRNA(Sec) + L-serine + ATP = L-seryl-tRNA(Sec) + AMP + diphosphate + H(+). The protein operates within aminoacyl-tRNA biosynthesis; selenocysteinyl-tRNA(Sec) biosynthesis; L-seryl-tRNA(Sec) from L-serine and tRNA(Sec): step 1/1. In terms of biological role, catalyzes the attachment of serine to tRNA(Ser). Is also able to aminoacylate tRNA(Sec) with serine, to form the misacylated tRNA L-seryl-tRNA(Sec), which will be further converted into selenocysteinyl-tRNA(Sec). The protein is Serine--tRNA ligase of Mycoplasmopsis agalactiae (strain NCTC 10123 / CIP 59.7 / PG2) (Mycoplasma agalactiae).